A 343-amino-acid polypeptide reads, in one-letter code: GDP-D-glucose phosphorylase 1 (343 aa).

His-183 functions as the Tele-GMP-histidine intermediate in the catalytic mechanism.

It belongs to the GDPGP1 family.

It localises to the cytoplasm. The catalysed reaction is GDP-alpha-D-glucose + phosphate = alpha-D-glucose 1-phosphate + GDP + H(+). Functionally, specific and highly efficient GDP-D-glucose phosphorylase regulating the levels of GDP-D-glucose in cells. This chain is GDP-D-glucose phosphorylase 1 (gdpgp1), found in Danio rerio (Zebrafish).